The primary structure comprises 234 residues: tRNA1(Val) (adenine(37)-N6)-methyltransferase (234 aa).

This sequence belongs to the methyltransferase superfamily. tRNA (adenine-N(6)-)-methyltransferase family.

It localises to the cytoplasm. It catalyses the reaction adenosine(37) in tRNA1(Val) + S-adenosyl-L-methionine = N(6)-methyladenosine(37) in tRNA1(Val) + S-adenosyl-L-homocysteine + H(+). Functionally, specifically methylates the adenine in position 37 of tRNA(1)(Val) (anticodon cmo5UAC). The protein is tRNA1(Val) (adenine(37)-N6)-methyltransferase of Pedobacter heparinus (strain ATCC 13125 / DSM 2366 / CIP 104194 / JCM 7457 / NBRC 12017 / NCIMB 9290 / NRRL B-14731 / HIM 762-3).